The sequence spans 213 residues: Uridine kinase (213 aa).

ATP is bound at residue 14-21; the sequence is GASASGKS.

The protein belongs to the uridine kinase family.

It localises to the cytoplasm. It catalyses the reaction uridine + ATP = UMP + ADP + H(+). The enzyme catalyses cytidine + ATP = CMP + ADP + H(+). It functions in the pathway pyrimidine metabolism; CTP biosynthesis via salvage pathway; CTP from cytidine: step 1/3. It participates in pyrimidine metabolism; UMP biosynthesis via salvage pathway; UMP from uridine: step 1/1. This is Uridine kinase from Vibrio cholerae serotype O1 (strain ATCC 39315 / El Tor Inaba N16961).